Here is a 530-residue protein sequence, read N- to C-terminus: Cytochrome P450 monooxygenase sttB (530 aa).

Residue asparagine 5 is glycosylated (N-linked (GlcNAc...) asparagine). A helical membrane pass occupies residues leucine 24–serine 44. Residue asparagine 230 is glycosylated (N-linked (GlcNAc...) asparagine).

It belongs to the cytochrome P450 family. It depends on heme as a cofactor.

The protein localises to the membrane. It carries out the reaction preaspterpenacid acid I + reduced [NADPH--hemoprotein reductase] + O2 = preaspterpenacid acid II + oxidized [NADPH--hemoprotein reductase] + H2O + H(+). It functions in the pathway secondary metabolite biosynthesis; terpenoid biosynthesis. Cytochrome P450 monooxygenase; part of the gene cluster that mediates the biosynthesis of aspterpenacids. Performs the C22-oxidative modification of the terpene synthase sttA product preaspterpenacid I to produce preaspterpenacid II. It has still to be determined how preaspterpenacid II is further modified to produce aspterpenacids. In Aspergillus terreus (strain NIH 2624 / FGSC A1156), this protein is Cytochrome P450 monooxygenase sttB.